The following is a 171-amino-acid chain: UPF0398 protein Sez_1569 (171 aa).

It belongs to the UPF0398 family.

The chain is UPF0398 protein Sez_1569 from Streptococcus equi subsp. zooepidemicus (strain MGCS10565).